Reading from the N-terminus, the 95-residue chain is Co-chaperonin GroES (95 aa).

The protein belongs to the GroES chaperonin family. In terms of assembly, heptamer of 7 subunits arranged in a ring. Interacts with the chaperonin GroEL.

The protein resides in the cytoplasm. In terms of biological role, together with the chaperonin GroEL, plays an essential role in assisting protein folding. The GroEL-GroES system forms a nano-cage that allows encapsulation of the non-native substrate proteins and provides a physical environment optimized to promote and accelerate protein folding. GroES binds to the apical surface of the GroEL ring, thereby capping the opening of the GroEL channel. The chain is Co-chaperonin GroES from Chlorobium phaeobacteroides (strain BS1).